Here is a 473-residue protein sequence, read N- to C-terminus: Cannabinoid receptor 1 (473 aa).

Residues 1 to 117 (MKSILDGLAD…CFMILNPSQQ (117 aa)) lie on the Extracellular side of the membrane. The tract at residues 2–23 (KSILDGLADTTFRTITTDLLYV) is required for mitochondrial localization. 2 N-linked (GlcNAc...) asparagine glycosylation sites follow: asparagine 78 and asparagine 84. A helical membrane pass occupies residues 118–143 (LAIAVLSLTLGTFTVLENLLVLCVIL). The Cytoplasmic segment spans residues 144–155 (HSRSLRCRPSYH). A helical membrane pass occupies residues 156–176 (FIGSLAVADLLGSVIFVYSFV). The Extracellular portion of the chain corresponds to 177–188 (DFHVFHRKDSPN). Residues 189-213 (VFLFKLGGVTASFTASVGSLFLTAI) form a helical membrane-spanning segment. Residues 214–233 (DRYISIHRPLAYKRIVTRPK) are Cytoplasmic-facing. A helical membrane pass occupies residues 234–256 (AVVAFCLMWTIAIVIAVLPLLGW). The Extracellular portion of the chain corresponds to 257–274 (NCKKLQSVCSDIFPLIDE). Residues 275–300 (TYLMFWIGVTSVLLLFIVYAYMYILW) traverse the membrane as a helical segment. Topologically, residues 301–345 (KAHSHAVRMIQRGTQKSIIIHTSEDGKVQVTRPDQARMDIRLAKT) are cytoplasmic. A helical membrane pass occupies residues 346-366 (LVLILVVLIICWGPLLAIMVY). At 367–378 (DVFGKMNKLIKT) the chain is on the extracellular side. The chain crosses the membrane as a helical span at residues 379–400 (VFAFCSMLCLLNSTVNPIIYAL). Residues 401–473 (RSKDLRHAFR…VSTDTSAEAL (73 aa)) lie on the Cytoplasmic side of the membrane. Cysteine 416 is lipidated: S-palmitoyl cysteine. Residues serine 426 and serine 430 each carry the phosphoserine modification.

Belongs to the G-protein coupled receptor 1 family. Interacts (via C-terminus) with CNRIP1. Associates with G protein alpha subunits, including G(i) alpha-1/GNAI1, G(i) alpha-3/GNAI3 and G(o)-alpha/GNAO1; palmitoylation is important for interaction with GNAI3 and GNAO1. Post-translationally, palmitoylation at Cys-416 is important for recruitment at both plasma membrane and lipid rafts and association with G protein alpha subunits. As to expression, expressed in the brain, in the striatum, medial septum, descending arm of the band of Broca, the amygdaloid nucleus, the hippocampus and cortex (at protein level). High levels in the lateral striatum. In rostral brain regions, high expression levels in the dorsal lateral striatum, while in the caudal brain regions, high levels are observed in the ventral lateral striatum. Expressed in monocytes/macrophages (at protein level). Expressed in striated muscles and in vascular smooth muscles cells (at protein level).

It localises to the cell membrane. The protein localises to the mitochondrion outer membrane. The protein resides in the cell projection. It is found in the axon. Its subcellular location is the presynapse. With respect to regulation, hemopressin, a peptide derived from hemoglobin subunit alpha (HBA1 and/or HBA2), acts as an antagonist peptide: hemopressin-binding efficiently blocks cannabinoid receptor CNR1 and subsequent signaling. In terms of biological role, G-protein coupled receptor for cannabinoids, including endocannabinoids (eCBs), such as N-arachidonoylethanolamide (also called anandamide or AEA) and 2-arachidonoylglycerol (2-AG). Mediates many cannabinoid-induced effects, acting, among others, on food intake, memory loss, gastrointestinal motility, catalepsy, ambulatory activity, anxiety, chronic pain. Signaling typically involves reduction in cyclic AMP. In the hypothalamus, may have a dual effect on mitochondrial respiration depending upon the agonist dose and possibly upon the cell type. Increases respiration at low doses, while decreases respiration at high doses. At high doses, CNR1 signal transduction involves G-protein alpha-i protein activation and subsequent inhibition of mitochondrial soluble adenylate cyclase, decrease in cyclic AMP concentration, inhibition of protein kinase A (PKA)-dependent phosphorylation of specific subunits of the mitochondrial electron transport system, including NDUFS2. In the hypothalamus, inhibits leptin-induced reactive oxygen species (ROS) formation and mediates cannabinoid-induced increase in SREBF1 and FASN gene expression. In response to cannabinoids, drives the release of orexigenic beta-endorphin, but not that of melanocyte-stimulating hormone alpha/alpha-MSH, from hypothalamic POMC neurons, hence promoting food intake. In the hippocampus, regulates cellular respiration and energy production in response to cannabinoids. Involved in cannabinoid-dependent depolarization-induced suppression of inhibition (DSI), a process in which depolarization of CA1 postsynaptic pyramidal neurons mobilizes eCBs, which retrogradely activate presynaptic CB1 receptors, transiently decreasing GABAergic inhibitory neurotransmission. Also reduces excitatory synaptic transmission. In superior cervical ganglions and cerebral vascular smooth muscle cells, inhibits voltage-gated Ca(2+) channels in a constitutive, as well as agonist-dependent manner. Induces leptin production in adipocytes and reduces LRP2-mediated leptin clearance in the kidney, hence participating in hyperleptinemia. In adipose tissue, CNR1 signaling leads to increased expression of SREBF1, ACACA and FASN genes. In the liver, activation by endocannabinoids leads to increased de novo lipogenesis and reduced fatty acid catabolism, associated with increased expression of SREBF1/SREBP-1, GCK, ACACA, ACACB and FASN genes. May also affect de novo cholesterol synthesis and HDL-cholesteryl ether uptake. Peripherally modulates energy metabolism. In high carbohydrate diet-induced obesity, may decrease the expression of mitochondrial dihydrolipoyl dehydrogenase/DLD in striated muscles, as well as that of selected glucose/ pyruvate metabolic enzymes, hence affecting energy expenditure through mitochondrial metabolism. In response to cannabinoid anandamide, elicits a pro-inflammatory response in macrophages, which involves NLRP3 inflammasome activation and IL1B and IL18 secretion. In macrophages infiltrating pancreatic islets, this process may participate in the progression of type-2 diabetes and associated loss of pancreatic beta-cells. The chain is Cannabinoid receptor 1 (Cnr1) from Rattus norvegicus (Rat).